Reading from the N-terminus, the 214-residue chain is Adenylate kinase (214 aa).

11 to 16 contributes to the ATP binding site; that stretch reads GTGKGT. The segment at 31–61 is NMP; the sequence is SSGDLFRFYAKEEKTALAEEIKSYINNGLYV. Residues S32, R37, 59 to 61, 87 to 90, and Q94 contribute to the AMP site; these read LYV and GYPR. The segment at 124-163 is LID; it reads LRRSCPQCKRIYNINSVDFKPKVANLCDLCKVELIHRKDD. R125 serves as a coordination point for ATP. The Zn(2+) site is built by C128 and C131. Position 134–135 (134–135) interacts with ATP; the sequence is IY. Zn(2+) is bound by residues C150 and C153. 2 residues coordinate AMP: R160 and R171. K199 contributes to the ATP binding site.

It belongs to the adenylate kinase family. As to quaternary structure, monomer.

The protein localises to the cytoplasm. It carries out the reaction AMP + ATP = 2 ADP. Its pathway is purine metabolism; AMP biosynthesis via salvage pathway; AMP from ADP: step 1/1. Catalyzes the reversible transfer of the terminal phosphate group between ATP and AMP. Plays an important role in cellular energy homeostasis and in adenine nucleotide metabolism. The polypeptide is Adenylate kinase (Mycoplasmoides gallisepticum (strain R(low / passage 15 / clone 2)) (Mycoplasma gallisepticum)).